Consider the following 266-residue polypeptide: Large ribosomal subunit protein eL8 (266 aa).

Residues 1–11 are compositionally biased toward basic residues; it reads MPKGKKAKGKK. Residues 1-21 form a disordered region; sequence MPKGKKAKGKKVAPAPSVAKK.

Belongs to the eukaryotic ribosomal protein eL8 family. As to quaternary structure, component of the large ribosomal subunit.

It is found in the cytoplasm. Component of the large ribosomal subunit. The ribosome is a large ribonucleoprotein complex responsible for the synthesis of proteins in the cell. In Ictalurus punctatus (Channel catfish), this protein is Large ribosomal subunit protein eL8 (rpl7a).